The sequence spans 410 residues: Elongation factor Tu (410 aa).

Residues 10–214 enclose the tr-type G domain; it reads KPHVNIGTIG…EVDAYIPTPE (205 aa). The segment at 19–26 is G1; the sequence is GHVDHGKT. 19-26 is a binding site for GTP; the sequence is GHVDHGKT. Thr-26 contributes to the Mg(2+) binding site. Residues 60–64 form a G2 region; sequence GITIN. The interval 81–84 is G3; it reads DCPG. Residues 81-85 and 136-139 each bind GTP; these read DCPGH and NKED. The segment at 136–139 is G4; that stretch reads NKED. Residues 174-176 are G5; the sequence is SAL.

This sequence belongs to the TRAFAC class translation factor GTPase superfamily. Classic translation factor GTPase family. EF-Tu/EF-1A subfamily. In terms of assembly, monomer.

Its subcellular location is the cytoplasm. It carries out the reaction GTP + H2O = GDP + phosphate + H(+). Functionally, GTP hydrolase that promotes the GTP-dependent binding of aminoacyl-tRNA to the A-site of ribosomes during protein biosynthesis. The sequence is that of Elongation factor Tu from Gloeothece citriformis (strain PCC 7424) (Cyanothece sp. (strain PCC 7424)).